The chain runs to 136 residues: Small ribosomal subunit protein uS8c (136 aa).

The protein belongs to the universal ribosomal protein uS8 family. Part of the 30S ribosomal subunit.

Its subcellular location is the plastid. The protein resides in the chloroplast. In terms of biological role, one of the primary rRNA binding proteins, it binds directly to 16S rRNA central domain where it helps coordinate assembly of the platform of the 30S subunit. This Hordeum vulgare (Barley) protein is Small ribosomal subunit protein uS8c (rps8).